A 185-amino-acid polypeptide reads, in one-letter code: Large ribosomal subunit protein uL22 (185 aa).

The interval Val157 to Asp185 is disordered. Basic residues predominate over residues Lys169 to Arg178.

This sequence belongs to the universal ribosomal protein uL22 family.

This Argas monolakensis (Mono lake bird tick) protein is Large ribosomal subunit protein uL22 (RpL17).